The sequence spans 467 residues: MFSLKTLPFLLLLHVQISKAFPVSSKEKNTKTVQDYLEKFYQLPSNQYQSTRKNGTNVIVEKLKEMQRFFGLNVTGKPNEETLDMMKKPRCGVPDSGGFMLTPGNPKWERTNLTYRIRNYTPQLSEAEVERAIKDAFELWSVASPLIFTRISQGEADINIAFYQRDHGDNSPFDGPNGILAHAFQPGQGIGGDAHFDAEETWTNTSANYNLFLVAAHEFGHSLGLAHSSDPGALMYPNYAFRETSNYSLPQDDIDGIQAIYGLSSNPIQPTGPSTPKPCDPSLTFDAITTLRGEILFFKDRYFWRRHPQLQRVEMNFISLFWPSLPTGIQAAYEDFDRDLIFLFKGNQYWALSGYDILQGYPKDISNYGFPSSVQAIDAAVFYRSKTYFFVNDQFWRYDNQRQFMEPGYPKSISGAFPGIESKVDAVFQQEHFFHVFSGPRYYAFDLIAQRVTRVARGNKWLNCRYG.

The signal sequence occupies residues 1–20 (MFSLKTLPFLLLLHVQISKA). A propeptide spans 21 to 100 (FPVSSKEKNT…CGVPDSGGFM (80 aa)) (activation peptide). N-linked (GlcNAc...) asparagine glycosylation is found at asparagine 54 and asparagine 73. The short motif at 89–96 (PRCGVPDS) is the Cysteine switch element. Residue cysteine 91 coordinates Zn(2+). Asparagine 112 carries an N-linked (GlcNAc...) asparagine glycan. Ca(2+) is bound at residue aspartate 157. Residues histidine 167 and aspartate 169 each coordinate Zn(2+). Aspartate 174, glycine 175, asparagine 177, and isoleucine 179 together coordinate Ca(2+). Residue histidine 182 participates in Zn(2+) binding. Glycine 189, glycine 191, and aspartate 193 together coordinate Ca(2+). Histidine 195 is a Zn(2+) binding site. Ca(2+) is bound by residues aspartate 197 and glutamate 200. The N-linked (GlcNAc...) asparagine glycan is linked to asparagine 204. Histidine 217 provides a ligand contact to Zn(2+). Glutamate 218 is a catalytic residue. Histidine 221 and histidine 227 together coordinate Zn(2+). Asparagine 246 carries an N-linked (GlcNAc...) asparagine glycan. 4 Hemopexin repeats span residues 276–325 (PKPC…WPSL), 326–372 (PTGI…GFPS), 374–420 (VQAI…FPGI), and 421–464 (ESKV…WLNC). Cysteine 279 and cysteine 464 are disulfide-bonded. Aspartate 286 contacts Ca(2+). Ca(2+) contacts are provided by aspartate 378 and aspartate 425.

The protein belongs to the peptidase M10A family. The cofactor is Ca(2+). Zn(2+) is required as a cofactor. In terms of tissue distribution, neutrophils.

It is found in the cytoplasmic granule. The protein resides in the secreted. It localises to the extracellular space. The protein localises to the extracellular matrix. The enzyme catalyses Cleavage of interstitial collagens in the triple helical domain. Unlike EC 3.4.24.7, this enzyme cleaves type III collagen more slowly than type I.. With respect to regulation, cannot be activated without removal of the activation peptide. In terms of biological role, can degrade fibrillar type I, II, and III collagens. The chain is Neutrophil collagenase (MMP8) from Homo sapiens (Human).